The chain runs to 345 residues: Putative membrane protein ORF59 (345 aa).

Helical transmembrane passes span 46-63 (LVFA…MMLI), 101-118 (IVFV…LVFL), 147-165 (IFGI…FSIL), and 265-286 (VVPV…WMVI).

It localises to the membrane. This chain is Putative membrane protein ORF59 (ORF59), found in Ictalurid herpesvirus 1 (strain Auburn) (IcHV-1).